Reading from the N-terminus, the 885-residue chain is Cytosolic carboxypeptidase-like protein 5 (885 aa).

The Peptidase M14 domain occupies 157 to 570 (YPFSYSDCQD…AMAIAALDMA (414 aa)). 2 residues coordinate Zn(2+): His252 and Glu255. The interval 343 to 402 (NSQSPSEHQHSSHLPPDAPLSDPEKADSLQNRAHLGRSSSGDKPEAWTQTEVAEQKPNSV) is disordered. Over residues 388–402 (AWTQTEVAEQKPNSV) the composition is skewed to polar residues. Residue His434 participates in Zn(2+) binding. The active-site Proton donor/acceptor is the Glu516. Disordered stretches follow at residues 605 to 733 (TTVN…LASS) and 783 to 839 (RLQA…PRPC). Residues 620–640 (PPRSNNGLPVSCSENTLSRAR) are compositionally biased toward polar residues. Low complexity-rich tracts occupy residues 641 to 666 (SFST…NSPS) and 714 to 733 (PTSS…LASS). Ser840 carries the phosphoserine modification.

The protein belongs to the peptidase M14 family. Zn(2+) serves as cofactor.

The protein localises to the cytoplasm. Its subcellular location is the cytosol. It localises to the nucleus. It is found in the cytoskeleton. The protein resides in the spindle. The protein localises to the midbody. It catalyses the reaction gamma-L-glutamyl-L-glutamyl-[protein] + H2O = L-glutamyl-[protein] + L-glutamate. It carries out the reaction (L-glutamyl)(n+1)-gamma-L-glutamyl-L-glutamyl-[protein] + H2O = (L-glutamyl)(n)-gamma-L-glutamyl-L-glutamyl-[protein] + L-glutamate. The enzyme catalyses C-terminal L-alpha-aminoacyl-L-glutamyl-[tubulin] + H2O = C-terminal L-alpha-aminoacyl-[tubulin] + L-glutamate. The catalysed reaction is C-terminal L-alpha-aminoacyl-L-glutamyl-L-glutamyl-[tubulin] + H2O = C-terminal L-alpha-aminoacyl-L-glutamyl-[tubulin] + L-glutamate. Its function is as follows. Metallocarboxypeptidase that mediates deglutamylation of tubulin and non-tubulin target proteins. Catalyzes the removal of polyglutamate side chains present on the gamma-carboxyl group of glutamate residues within the C-terminal tail of alpha- and beta-tubulin. Cleaves alpha- and gamma-linked polyglutamate tubulin side-chain, as well as the branching point glutamate. Also catalyzes the removal of alpha-linked glutamate residues from the carboxy-terminus of alpha-tubulin. Mediates deglutamylation of nucleotidyltransferase CGAS, leading to CGAS antiviral defense response activation. This chain is Cytosolic carboxypeptidase-like protein 5 (AGBL5), found in Bos taurus (Bovine).